Consider the following 801-residue polypeptide: Vacuolar transporter chaperone complex subunit 4 (801 aa).

At Met1–Arg692 the chain is on the cytoplasmic side. ATP contacts are provided by Lys215, Arg286, Arg288, Lys312, Lys325, and Arg391. Glu441 lines the Mn(2+) pocket. Lys473 is a catalytic residue. Residues Leu693 to Val713 traverse the membrane as a helical segment. The Vacuolar portion of the chain corresponds to Thr714–Asn723. The helical transmembrane segment at Phe724–Leu744 threads the bilayer. At Met745 to Pro768 the chain is on the cytoplasmic side. The helical transmembrane segment at Thr769–Gly789 threads the bilayer. Over Arg790 to Phe801 the chain is Vacuolar.

The protein belongs to the VTC4 family. The VTC core complex is an integral membrane heterooligomer composed of at least the catalytic subunit vtc4 and the accessory subunits vtc1 and vtc2. vtc1 is a small membrane protein without hydrophilic domain. Vtc2 and vtc4 are related and have 2 hydrophilic domains that face the cytosol, an N-terminal SPX domain and the central core domain. The central core in vtc4 is the catalytic domain. Requires Mn(2+) as cofactor.

The protein localises to the acidocalcisome membrane. The catalysed reaction is [phosphate](n) + ATP = [phosphate](n+1) + ADP. Its activity is regulated as follows. Activity of the enzyme is Mn(2+)-dependent and enhanced in the presence of pyrophosphate (PPi). Functionally, component of a polyphosphate synthase complex that utilizes ATP to synthesize and translocate polyphosphate to acidocalcisomes in epimastigotes, insect-stages of Trypanosoma brucei. Catalytic subunit of the vacuolar transporter chaperone (VTC) complex. The VTC complex acts as a vacuolar polyphosphate polymerase that catalyzes the synthesis of inorganic polyphosphate (polyP) via transfer of phosphate from ATP to a growing polyP chain, releasing ADP. VTC exposes its catalytic domain vtc4 to the cytosol, where the growing polyP chain winds through a tunnel-shaped pocket, integrating cytoplasmic polymer synthesis with polyP membrane translocation. The VTC complex carries 9 vacuolar transmembrane domains, which are likely to constitute the translocation channel into the organelle lumen. PolyP synthesis is tightly coupled to its transport into the vacuole lumen, in order to avoid otherwise toxic intermediates in the cytosol, and it depends on the proton gradient across the membrane, formed by V-ATPase. The VTC complex also plays a role in vacuolar membrane fusion. Essential for infection and parasite survival in the mammalian host. The polypeptide is Vacuolar transporter chaperone complex subunit 4 (Trypanosoma cruzi (strain CL Brener)).